Consider the following 370-residue polypeptide: A-type ATP synthase subunit C (370 aa).

Belongs to the V-ATPase V0D/AC39 subunit family. In terms of assembly, has multiple subunits with at least A(3), B(3), C, D, E, F, H, I and proteolipid K(x).

The protein resides in the cell membrane. Component of the A-type ATP synthase that produces ATP from ADP in the presence of a proton gradient across the membrane. The chain is A-type ATP synthase subunit C from Pyrococcus furiosus (strain ATCC 43587 / DSM 3638 / JCM 8422 / Vc1).